A 335-amino-acid chain; its full sequence is Methionine import ATP-binding protein MetN 1 (335 aa).

The 241-residue stretch at 2–242 (IEFQNVHKTY…PKHPTTRRFV (241 aa)) folds into the ABC transporter domain. ATP is bound at residue 38-45 (GHSGAGKS).

Belongs to the ABC transporter superfamily. Methionine importer (TC 3.A.1.24) family. In terms of assembly, the complex is composed of two ATP-binding proteins (MetN), two transmembrane proteins (MetI) and a solute-binding protein (MetQ).

The protein resides in the cell inner membrane. It catalyses the reaction L-methionine(out) + ATP + H2O = L-methionine(in) + ADP + phosphate + H(+). The catalysed reaction is D-methionine(out) + ATP + H2O = D-methionine(in) + ADP + phosphate + H(+). In terms of biological role, part of the ABC transporter complex MetNIQ involved in methionine import. Responsible for energy coupling to the transport system. In Pseudomonas fluorescens (strain ATCC BAA-477 / NRRL B-23932 / Pf-5), this protein is Methionine import ATP-binding protein MetN 1.